A 134-amino-acid polypeptide reads, in one-letter code: Large ribosomal subunit protein uL24 (134 aa).

This sequence belongs to the universal ribosomal protein uL24 family. As to quaternary structure, part of the 50S ribosomal subunit.

Its function is as follows. One of two assembly initiator proteins, it binds directly to the 5'-end of the 23S rRNA, where it nucleates assembly of the 50S subunit. Located at the polypeptide exit tunnel on the outside of the subunit. This is Large ribosomal subunit protein uL24 from Sulfolobus acidocaldarius (strain ATCC 33909 / DSM 639 / JCM 8929 / NBRC 15157 / NCIMB 11770).